Reading from the N-terminus, the 485-residue chain is MNTSHVRVVTHMCGFLVWLYSLSMLPPMVVALFYKEKSLFVFFITFVIFFCIGGGAWYTTKKSGIQLRTRDGFIIIVMFWILFSVISAFPLWIDSELNLTFIDALFEGVSGITTTGATVIDDVSSLPRAYLYYRSQLNFIGGLGVIVLAVAVLPLLGIGGAKLYQSEMPGPFKDDKLTPRLADTSRTLWITYSLLGIACIVCYRLAGMPLFDAICHGISTVSLGGFSTHSESIGYFNNYLVELVAGSFSLLSAFNFTLWYIVISRKTIKPLIRDIELRFFLLIALGVIIVTSFQVWHIGMYDLHGSFIHSFFLASSMLTDNGLATQDYASWPTHTIVFLLLSSFFGGCIGSTCGGIKSLRFLILFKQSKHEINQLSHPRALLSVNVGGKIVTDRVMRSVWSFFFLYTLFTVFFILVLNGMGYDFLTSFATVAACINNMGLGFGATASSFGVLNDIAKCLMCIAMILGRLEIYPVIILFSGFFWRS.

The Cytoplasmic segment spans residues 1-5 (MNTSH). A helical transmembrane segment spans residues 6 to 32 (VRVVTHMCGFLVWLYSLSMLPPMVVAL). At 33-38 (FYKEKS) the chain is on the periplasmic side. Residues 39–60 (LFVFFITFVIFFCIGGGAWYTT) form a helical membrane-spanning segment. Residues 61–68 (KKSGIQLR) are Cytoplasmic-facing. A helical membrane pass occupies residues 69–93 (TRDGFIIIVMFWILFSVISAFPLWI). Residues 101–112 (FIDALFEGVSGI) constitute an intramembrane region (helical; Pore-forming). The stretch at 113-118 (TTTGAT) is an intramembrane region. The interval 113–118 (TTTGAT) is selectivity filter part 1. The K(+) site is built by threonine 114 and threonine 115. Over 119–127 (VIDDVSSLP) the chain is Periplasmic. A helical transmembrane segment spans residues 128–153 (RAYLYYRSQLNFIGGLGVIVLAVAVL). Residues 154-180 (PLLGIGGAKLYQSEMPGPFKDDKLTPR) are Cytoplasmic-facing. Residues 181 to 205 (LADTSRTLWITYSLLGIACIVCYRL) form a helical membrane-spanning segment. Residues 206 to 208 (AGM) are Periplasmic-facing. An intramembrane region is located at residue proline 209. The segment at residues 210-221 (LFDAICHGISTV) is an intramembrane region (helical; Pore-forming). An intramembrane segment occupies 222–227 (SLGGFS). Residues 222 to 227 (SLGGFS) are selectivity filter part 2. Positions 223 and 224 each coordinate K(+). Residues 228–237 (THSESIGYFN) lie on the Periplasmic side of the membrane. An intramembrane region (helical) is located at residues 238-253 (NYLVELVAGSFSLLSA). The helical transmembrane segment at 277–297 (LRFFLLIALGVIIVTSFQVWH) threads the bilayer. The segment at residues 303–318 (LHGSFIHSFFLASSML) is an intramembrane region (helical; Pore-forming). Residues 319 to 324 (TDNGLA) lie within the membrane without spanning it. The selectivity filter part 3 stretch occupies residues 319-324 (TDNGLA). K(+) contacts are provided by aspartate 320 and asparagine 321. The Periplasmic portion of the chain corresponds to 325 to 332 (TQDYASWP). Positions 333–344 (THTIVFLLLSSF) form an intramembrane region, helical. The note=Loop between two helices intramembrane region spans 345–357 (FGGCIGSTCGGIK). A helical membrane pass occupies residues 392–419 (TDRVMRSVWSFFFLYTLFTVFFILVLNG). At 420–421 (MG) the chain is on the periplasmic side. Residues 422–423 (YD) lie within the membrane without spanning it. The helical; Pore-forming intramembrane region spans 424–434 (FLTSFATVAAC). Residues 435-441 (INNMGLG) lie within the membrane without spanning it. The segment at 436-441 (NNMGLG) is selectivity filter part 4. Residues asparagine 437 and methionine 438 each coordinate K(+). Over 442-453 (FGATASSFGVLN) the chain is Periplasmic. The helical intramembrane region spans 454-465 (DIAKCLMCIAMI).

It belongs to the TrkH potassium transport family.

It localises to the cell inner membrane. In terms of biological role, low-affinity potassium transport system. Interacts with Trk system potassium uptake protein TrkA. Requires TrkE (sapD) for maximal transport activity, low activity is seen in its absence; no further stimulation is seen with SapF. Transport in the absence of SapD is dependent on a high membrane potential and a high cytoplasmic ATP concentration, suggesting this protein may be able to interact with other ATP-binding proteins. Can transport potassium and rubidium. The chain is Trk system potassium uptake protein TrkG (trkG) from Escherichia coli (strain K12).